A 154-amino-acid chain; its full sequence is Cyclin-dependent protein kinase inhibitor SMR14 (154 aa).

The interval 1 to 111 (MSKIKIFHLF…RPPRKPKAIP (111 aa)) is disordered. Residues 24-37 (SLLVPSKSDSLDSS) show a composition bias toward low complexity. The segment covering 74–83 (KWECKDEESP) has biased composition (basic and acidic residues).

In terms of biological role, probable cyclin-dependent protein kinase (CDK) inhibitor that functions as a repressor of mitosis in the endoreduplication cell cycle. The chain is Cyclin-dependent protein kinase inhibitor SMR14 from Arabidopsis thaliana (Mouse-ear cress).